A 198-amino-acid chain; its full sequence is MDIILLERIPRLGQMGDIVSVKDGYARNFLLPQGKALRANEANKKHFETQRAQLEARNLERKSEAQKIAEKLDGQSFIAVRSAGETGQLYGSVSTRDIAEIITDEGFSIGRNQIELNHPIKMIGLHTITLSLHPEVQISVVINVARSTSEAQRQAEGETLTSAEEIYNLQEEILEENQEELLVEEINDNDINSPHQEA.

This sequence belongs to the bacterial ribosomal protein bL9 family.

Its function is as follows. Binds to the 23S rRNA. The protein is Large ribosomal subunit protein bL9 of Bartonella tribocorum (strain CIP 105476 / IBS 506).